Reading from the N-terminus, the 717-residue chain is Mitotic spindle assembly checkpoint protein MAD1 (717 aa).

M1 bears the N-acetylmethionine mark. Position 16 is a phosphoserine (S16). Residues 46–631 (EQSMQLEERA…QTKIQEFRKV (586 aa)) are a coiled coil. K61 carries the post-translational modification N6-acetyllysine; alternate. K61 is covalently cross-linked (Glycyl lysine isopeptide (Lys-Gly) (interchain with G-Cter in SUMO2); alternate). The Nuclear localization signal signature appears at 79 to 82 (KRAR). Phosphoserine occurs at positions 214 and 428. The tract at residues 380 to 532 (LLEERKKREI…EMQMERLTLQ (153 aa)) is necessary for interaction with NEK2. The tract at residues 540 to 551 (TKVLHMSLNPAS) is necessary for interaction with MAD2L1.

Belongs to the MAD1 family. As to quaternary structure, homodimer. Dimerizes via its N- and C- terminal regions. Heterodimerizes with MAD2L1 in order to form a tetrameric MAD1L1-MAD2L1 core complex. Interacts with the closed conformation form of MAD2L1 (C-MAD2) and open conformation form of MAD2L1 (O-MAD2). It is unclear whether MAD1L1 dimerization promotes the conversion of closed to open conformation of MAD2L1. Formation of a heterotetrameric core complex containing two molecules each of MAD1L1 and of MAD2L1 promotes binding of another molecule of MAD2L1 to each MAD2L1, resulting in a heterohexamer. Perturbation of the original MAD1L1-MAD2L1 structure by the spindle checkpoint may decrease MAD2L1 affinity for MAD1L1. CDC20 can compete with MAD1L1 for MAD2L1 binding, until the attachment and/or tension dampen the checkpoint signal, preventing further release of MAD2L1 on to CDC20. Also able to interact with the BUB1/BUB3 complex. Interacts with NEK2. Interacts with TTK. Interacts with TPR; the interactions occurs in a microtubule-independent manner. Interacts with IK. Interacts with the viral Tax protein. Interacts with PRAP1. In terms of processing, phosphorylated; by BUB1. Become hyperphosphorylated in late S through M phases or after mitotic spindle damage.

The protein resides in the nucleus. Its subcellular location is the chromosome. It localises to the centromere. It is found in the kinetochore. The protein localises to the nucleus envelope. The protein resides in the cytoplasm. Its subcellular location is the cytoskeleton. It localises to the microtubule organizing center. It is found in the centrosome. The protein localises to the spindle. The protein resides in the spindle pole. Component of the spindle-assembly checkpoint that prevents the onset of anaphase until all chromosomes are properly aligned at the metaphase plate. Forms a heterotetrameric complex with the closed conformation form of MAD2L1 (C-MAD2) at unattached kinetochores during prometaphase, recruits an open conformation of MAD2L1 (O-MAD2) and promotes the conversion of O-MAD2 to C-MAD2, which ensures mitotic checkpoint signaling. This chain is Mitotic spindle assembly checkpoint protein MAD1 (MAD1L1), found in Cricetulus griseus (Chinese hamster).